The following is a 157-amino-acid chain: Transcription elongation factor GreB (157 aa).

The protein belongs to the GreA/GreB family. GreB subfamily.

Necessary for efficient RNA polymerase transcription elongation past template-encoded arresting sites. The arresting sites in DNA have the property of trapping a certain fraction of elongating RNA polymerases that pass through, resulting in locked ternary complexes. Cleavage of the nascent transcript by cleavage factors such as GreA or GreB allows the resumption of elongation from the new 3'terminus. GreB releases sequences of up to 9 nucleotides in length. In Salmonella typhi, this protein is Transcription elongation factor GreB.